The chain runs to 369 residues: Dual-specificity RNA methyltransferase RlmN (369 aa).

Residue Glu-96 is the Proton acceptor of the active site. Positions 102–338 constitute a Radical SAM core domain; sequence DGERGTLCVS…VTTIRTTRGD (237 aa). A disulfide bond links Cys-109 and Cys-344. Cys-116, Cys-120, and Cys-123 together coordinate [4Fe-4S] cluster. Residues 169 to 170, Ser-201, 223 to 225, and Asn-301 each bind S-adenosyl-L-methionine; these read GE and SLH. Catalysis depends on Cys-344, which acts as the S-methylcysteine intermediate.

This sequence belongs to the radical SAM superfamily. RlmN family. It depends on [4Fe-4S] cluster as a cofactor.

The protein localises to the cytoplasm. It carries out the reaction adenosine(2503) in 23S rRNA + 2 reduced [2Fe-2S]-[ferredoxin] + 2 S-adenosyl-L-methionine = 2-methyladenosine(2503) in 23S rRNA + 5'-deoxyadenosine + L-methionine + 2 oxidized [2Fe-2S]-[ferredoxin] + S-adenosyl-L-homocysteine. The enzyme catalyses adenosine(37) in tRNA + 2 reduced [2Fe-2S]-[ferredoxin] + 2 S-adenosyl-L-methionine = 2-methyladenosine(37) in tRNA + 5'-deoxyadenosine + L-methionine + 2 oxidized [2Fe-2S]-[ferredoxin] + S-adenosyl-L-homocysteine. Its function is as follows. Specifically methylates position 2 of adenine 2503 in 23S rRNA and position 2 of adenine 37 in tRNAs. m2A2503 modification seems to play a crucial role in the proofreading step occurring at the peptidyl transferase center and thus would serve to optimize ribosomal fidelity. The protein is Dual-specificity RNA methyltransferase RlmN of Marinobacter nauticus (strain ATCC 700491 / DSM 11845 / VT8) (Marinobacter aquaeolei).